The sequence spans 82 residues: MRLVVCLVFLASFALVCQGQVYKGGYTRPIPRPPPFVRPLPGGPIGPYNGRPVSCRGISFSQARSCCSRLGRCCHVGKGYSG.

The N-terminal stretch at 1–19 (MRLVVCLVFLASFALVCQG) is a signal peptide. Gln20 carries the post-translational modification Pyrrolidone carboxylic acid. Intrachain disulfides connect Cys55–Cys73 and Cys67–Cys74. Ser81 bears the Serine amide mark.

Belongs to the penaeidin family.

The protein localises to the cytoplasmic granule. Its function is as follows. Antibacterial and antifungal activity. Presents chitin-binding activity. This Penaeus vannamei (Whiteleg shrimp) protein is Penaeidin-3i.